A 48-amino-acid polypeptide reads, in one-letter code: uncharacterized protein (48 aa).

The segment at 1–30 is disordered; the sequence is MLGRTKLGNRNAQANNNAKKKNGFQTHFDS.

This is an uncharacterized protein from Bacillus subtilis (strain 168).